The sequence spans 418 residues: Tubulin alpha chain (418 aa).

GTP-binding residues include Q11, E71, S140, G144, T179, N206, and N228. Residue E71 participates in Mg(2+) binding. E255 is a catalytic residue.

Belongs to the tubulin family. In terms of assembly, dimer of alpha and beta chains. A typical microtubule is a hollow water-filled tube with an outer diameter of 25 nm and an inner diameter of 15 nM. Alpha-beta heterodimers associate head-to-tail to form protofilaments running lengthwise along the microtubule wall with the beta-tubulin subunit facing the microtubule plus end conferring a structural polarity. Microtubules usually have 13 protofilaments but different protofilament numbers can be found in some organisms and specialized cells. Mg(2+) is required as a cofactor.

It is found in the cytoplasm. It localises to the cytoskeleton. The enzyme catalyses GTP + H2O = GDP + phosphate + H(+). Tubulin is the major constituent of microtubules, a cylinder consisting of laterally associated linear protofilaments composed of alpha- and beta-tubulin heterodimers. Microtubules grow by the addition of GTP-tubulin dimers to the microtubule end, where a stabilizing cap forms. Below the cap, tubulin dimers are in GDP-bound state, owing to GTPase activity of alpha-tubulin. This chain is Tubulin alpha chain (TUB1), found in Ajellomyces capsulatus (Darling's disease fungus).